An 856-amino-acid polypeptide reads, in one-letter code: DNA mismatch repair protein MutS (856 aa).

607-614 (GPNMSGKS) contacts ATP.

Belongs to the DNA mismatch repair MutS family.

This protein is involved in the repair of mismatches in DNA. It is possible that it carries out the mismatch recognition step. This protein has a weak ATPase activity. This chain is DNA mismatch repair protein MutS, found in Lactobacillus delbrueckii subsp. bulgaricus (strain ATCC 11842 / DSM 20081 / BCRC 10696 / JCM 1002 / NBRC 13953 / NCIMB 11778 / NCTC 12712 / WDCM 00102 / Lb 14).